The primary structure comprises 114 residues: Notch-regulated ankyrin repeat-containing protein (114 aa).

ANK repeat units lie at residues 50 to 79 and 83 to 112; these read EGQT…DIRL and DGWS…YSSS.

Belongs to the NRARP family. As to quaternary structure, forms a ternary complex with the intracellular domain (ICD) of notch1 and rbpj/suh.

Functionally, promotes loss of intracellular domain (ICD) of Notch1 in embryos. By down-regulating ICD levels, could function as a negative feedback regulator of Notch signaling that attenuates ICD-mediated transcription. Involved in angiogenesis. May be involved in somitogenesis. The polypeptide is Notch-regulated ankyrin repeat-containing protein (nrarp) (Xenopus laevis (African clawed frog)).